Reading from the N-terminus, the 72-residue chain is Translation initiation factor IF-1 (72 aa).

An S1-like domain is found at 1 to 72; that stretch reads MAKDDVIQMQ…SRARIVFRAK (72 aa).

This sequence belongs to the IF-1 family. Component of the 30S ribosomal translation pre-initiation complex which assembles on the 30S ribosome in the order IF-2 and IF-3, IF-1 and N-formylmethionyl-tRNA(fMet); mRNA recruitment can occur at any time during PIC assembly.

It localises to the cytoplasm. One of the essential components for the initiation of protein synthesis. Stabilizes the binding of IF-2 and IF-3 on the 30S subunit to which N-formylmethionyl-tRNA(fMet) subsequently binds. Helps modulate mRNA selection, yielding the 30S pre-initiation complex (PIC). Upon addition of the 50S ribosomal subunit IF-1, IF-2 and IF-3 are released leaving the mature 70S translation initiation complex. This Burkholderia thailandensis (strain ATCC 700388 / DSM 13276 / CCUG 48851 / CIP 106301 / E264) protein is Translation initiation factor IF-1.